The following is a 556-amino-acid chain: Urocanate hydratase (556 aa).

NAD(+) is bound by residues 52–53, glutamine 130, 176–178, glutamate 196, arginine 201, 242–243, 263–267, 273–274, and tyrosine 322; these read GG, GMG, NA, QTSAH, and YL. Cysteine 410 is a catalytic residue. Glycine 492 is an NAD(+) binding site.

The protein belongs to the urocanase family. NAD(+) serves as cofactor.

Its subcellular location is the cytoplasm. The enzyme catalyses 4-imidazolone-5-propanoate = trans-urocanate + H2O. It participates in amino-acid degradation; L-histidine degradation into L-glutamate; N-formimidoyl-L-glutamate from L-histidine: step 2/3. In terms of biological role, catalyzes the conversion of urocanate to 4-imidazolone-5-propionate. This is Urocanate hydratase from Bradyrhizobium diazoefficiens (strain JCM 10833 / BCRC 13528 / IAM 13628 / NBRC 14792 / USDA 110).